The sequence spans 137 residues: Large ribosomal subunit protein uL16 (137 aa).

It belongs to the universal ribosomal protein uL16 family. Part of the 50S ribosomal subunit.

In terms of biological role, binds 23S rRNA and is also seen to make contacts with the A and possibly P site tRNAs. The chain is Large ribosomal subunit protein uL16 from Rhodopseudomonas palustris (strain BisA53).